The following is a 211-amino-acid chain: Methylthioribulose-1-phosphate dehydratase (211 aa).

Positions 105 and 107 each coordinate Zn(2+).

This sequence belongs to the aldolase class II family. MtnB subfamily. It depends on Zn(2+) as a cofactor.

It carries out the reaction 5-(methylsulfanyl)-D-ribulose 1-phosphate = 5-methylsulfanyl-2,3-dioxopentyl phosphate + H2O. The protein operates within amino-acid biosynthesis; L-methionine biosynthesis via salvage pathway; L-methionine from S-methyl-5-thio-alpha-D-ribose 1-phosphate: step 2/6. Catalyzes the dehydration of methylthioribulose-1-phosphate (MTRu-1-P) into 2,3-diketo-5-methylthiopentyl-1-phosphate (DK-MTP-1-P). The polypeptide is Methylthioribulose-1-phosphate dehydratase (Acidiphilium cryptum (strain JF-5)).